The primary structure comprises 1444 residues: Adhesin P1 (1444 aa).

The N-terminal stretch at 1–30 (MHQPKKRLAKKSWAFLTAALTLGVITGVGG) is a signal peptide. 3 disordered regions span residues 231 to 283 (QSSF…EVER), 845 to 885 (IPFE…ALPN), and 927 to 949 (GDSN…TNEG). The span at 240–257 (LQKDSPVKDSSKQGEKLS) shows a compositional bias: basic and acidic residues. Low complexity predominate over residues 258–272 (ETTASSMSSGMATST). 2 stretches are compositionally biased toward polar residues: residues 851–860 (KPSNNSTPFD) and 868–878 (VTPSGGSSKPT). Over residues 933-946 (FNKDSEQKWDKTET) the composition is skewed to basic and acidic residues. The chain crosses the membrane as a helical span at residues 1353 to 1373 (VLPLIVTVPIVVIILSVTLGL). Positions 1419 to 1444 (NAPKKLKQATPTKPTPKTPPKPPVKQ) are disordered. The span at 1431-1444 (KPTPKTPPKPPVKQ) shows a compositional bias: pro residues.

It belongs to the adhesin P1 family.

It localises to the cell membrane. Functionally, the protein is the major adhesin mediating the attachment of this mycoplasma to the ciliated epithelium. In Mycoplasma genitalium (strain ATCC 33530 / DSM 19775 / NCTC 10195 / G37) (Mycoplasmoides genitalium), this protein is Adhesin P1 (mgpA).